A 271-amino-acid polypeptide reads, in one-letter code: 3-methyl-2-oxobutanoate hydroxymethyltransferase (271 aa).

Positions 42 and 86 each coordinate Mg(2+). 3-methyl-2-oxobutanoate is bound by residues 42 to 43 (DS), aspartate 86, and lysine 116. Residue glutamate 118 participates in Mg(2+) binding. Glutamate 185 serves as the catalytic Proton acceptor.

The protein belongs to the PanB family. In terms of assembly, homodecamer; pentamer of dimers. Mg(2+) serves as cofactor.

It is found in the cytoplasm. It catalyses the reaction 3-methyl-2-oxobutanoate + (6R)-5,10-methylene-5,6,7,8-tetrahydrofolate + H2O = 2-dehydropantoate + (6S)-5,6,7,8-tetrahydrofolate. Its pathway is cofactor biosynthesis; (R)-pantothenate biosynthesis; (R)-pantoate from 3-methyl-2-oxobutanoate: step 1/2. In terms of biological role, catalyzes the reversible reaction in which hydroxymethyl group from 5,10-methylenetetrahydrofolate is transferred onto alpha-ketoisovalerate to form ketopantoate. The chain is 3-methyl-2-oxobutanoate hydroxymethyltransferase from Synechococcus sp. (strain CC9605).